A 278-amino-acid polypeptide reads, in one-letter code: Biotin synthase (278 aa).

The 227-residue stretch at 1–227 folds into the Radical SAM core domain; it reads MQIMLCAISN…QSVVMVAGGR (227 aa). The [4Fe-4S] cluster site is built by cysteine 16, cysteine 20, and cysteine 23. Cysteine 60, cysteine 95, and cysteine 153 together coordinate [2Fe-2S] cluster.

The protein belongs to the radical SAM superfamily. Biotin synthase family. As to quaternary structure, homodimer. [4Fe-4S] cluster is required as a cofactor. It depends on [2Fe-2S] cluster as a cofactor.

The catalysed reaction is (4R,5S)-dethiobiotin + (sulfur carrier)-SH + 2 reduced [2Fe-2S]-[ferredoxin] + 2 S-adenosyl-L-methionine = (sulfur carrier)-H + biotin + 2 5'-deoxyadenosine + 2 L-methionine + 2 oxidized [2Fe-2S]-[ferredoxin]. It participates in cofactor biosynthesis; biotin biosynthesis; biotin from 7,8-diaminononanoate: step 2/2. Functionally, catalyzes the conversion of dethiobiotin (DTB) to biotin by the insertion of a sulfur atom into dethiobiotin via a radical-based mechanism. This Campylobacter jejuni (strain RM1221) protein is Biotin synthase.